A 94-amino-acid polypeptide reads, in one-letter code: uncharacterized protein (94 aa).

The segment at 1–22 (MATLQQAQQQNNQLTQQNNQLT) is disordered. Residues 1–77 (MATLQQAQQQ…NRLHSENHRL (77 aa)) adopt a coiled-coil conformation.

This is an uncharacterized protein from Acheta domesticus (House cricket).